We begin with the raw amino-acid sequence, 439 residues long: Divalent metal cation transporter MntH 1 (439 aa).

A run of 9 helical transmembrane segments spans residues 64–84 (FGYALLFVVVLASFSGMLLQS), 139–161 (LLGVSITTGVVLTAFDTLIVLAL), 171–191 (AIVLGLIATIGACFFVELVLI), 214–234 (PLYLAIGILGATVMPHNLYLH), 262–282 (IGSLSLALLVNAAILILAAAA), 300–320 (LLDPLVGGALASFLFGFALLA), 359–379 (LVPALIGVLWLGEAAVGKLLV), 380–400 (LSQVVLSLQLPFALWPLIRFS), and 418–438 (LAWSLFGLISAANLTLLYFWF).

The protein belongs to the NRAMP family.

The protein localises to the cell inner membrane. In terms of biological role, h(+)-stimulated, divalent metal cation uptake system. This Pseudomonas aeruginosa (strain ATCC 15692 / DSM 22644 / CIP 104116 / JCM 14847 / LMG 12228 / 1C / PRS 101 / PAO1) protein is Divalent metal cation transporter MntH 1.